We begin with the raw amino-acid sequence, 944 residues long: 2-oxoglutarate dehydrogenase E1 component (944 aa).

A disordered region spans residues 914–944 (RRRRSSPAEGDPTVHKKEQERIVSDSLTRKN). A compositionally biased stretch (basic and acidic residues) spans 925 to 936 (PTVHKKEQERIV).

This sequence belongs to the alpha-ketoglutarate dehydrogenase family. Homodimer. Part of the 2-oxoglutarate dehydrogenase (OGDH) complex composed of E1 (2-oxoglutarate dehydrogenase), E2 (dihydrolipoamide succinyltransferase) and E3 (dihydrolipoamide dehydrogenase); the complex contains multiple copies of the three enzymatic components (E1, E2 and E3). Thiamine diphosphate serves as cofactor.

The enzyme catalyses N(6)-[(R)-lipoyl]-L-lysyl-[protein] + 2-oxoglutarate + H(+) = N(6)-[(R)-S(8)-succinyldihydrolipoyl]-L-lysyl-[protein] + CO2. Its function is as follows. E1 component of the 2-oxoglutarate dehydrogenase (OGDH) complex which catalyzes the decarboxylation of 2-oxoglutarate, the first step in the conversion of 2-oxoglutarate to succinyl-CoA and CO(2). The protein is 2-oxoglutarate dehydrogenase E1 component of Bacillus subtilis (strain 168).